Reading from the N-terminus, the 376-residue chain is DNA replication and repair protein RecF (376 aa).

30–37 (GHNGVGKT) contacts ATP.

Belongs to the RecF family.

It is found in the cytoplasm. In terms of biological role, the RecF protein is involved in DNA metabolism; it is required for DNA replication and normal SOS inducibility. RecF binds preferentially to single-stranded, linear DNA. It also seems to bind ATP. In Salinispora arenicola (strain CNS-205), this protein is DNA replication and repair protein RecF.